Consider the following 426-residue polypeptide: MDQIIVRGNGPLKGEIPITGAKNACLALMPATLLTDQPLTLTNAPRLSDIRTMTALLQSLGAEVASLQDGQVLALSSHDLTSHRADYDIVRKMRASILVLGPMLARDGHAVVSLPGGCAIGARPVDLHLRALEAMGADLDLREGYVHAKAPSGGLRGAVIDFPLVSVGATENALMAATLARGTTVINNAAREPEIVDLAECLRRMGAQIEGEGTSTITVEGVQALGGATHPVVTDRIELGTYMLAPAICGGEVECLGGRIDLVAAFCEKLDEAGIEVVETGRGLKVSRKNGRVRAVDVVTEPFPGFPTDLQAQMMALLCTAEGTSVLEEKIFENRFMHAPELARMGARIEVHGGHATVHGVEKLRGAPVMATDLRASVSLILAGLAAEGETIVSRVYHLDRGYEKVVRKLRGVGADIERIKEVADG.

22–23 (KN) provides a ligand contact to phosphoenolpyruvate. UDP-N-acetyl-alpha-D-glucosamine is bound at residue Arg94. Cys118 serves as the catalytic Proton donor. The residue at position 118 (Cys118) is a 2-(S-cysteinyl)pyruvic acid O-phosphothioketal. Residues 123 to 127 (RPVDL), Asp309, and Ile331 contribute to the UDP-N-acetyl-alpha-D-glucosamine site.

It belongs to the EPSP synthase family. MurA subfamily.

Its subcellular location is the cytoplasm. It carries out the reaction phosphoenolpyruvate + UDP-N-acetyl-alpha-D-glucosamine = UDP-N-acetyl-3-O-(1-carboxyvinyl)-alpha-D-glucosamine + phosphate. It functions in the pathway cell wall biogenesis; peptidoglycan biosynthesis. Its function is as follows. Cell wall formation. Adds enolpyruvyl to UDP-N-acetylglucosamine. This chain is UDP-N-acetylglucosamine 1-carboxyvinyltransferase, found in Paracoccus denitrificans (strain Pd 1222).